The chain runs to 496 residues: Lysine--tRNA ligase (496 aa).

Glu-409 and Glu-416 together coordinate Mg(2+).

Belongs to the class-II aminoacyl-tRNA synthetase family. Homodimer. Requires Mg(2+) as cofactor.

The protein localises to the cytoplasm. It catalyses the reaction tRNA(Lys) + L-lysine + ATP = L-lysyl-tRNA(Lys) + AMP + diphosphate. The polypeptide is Lysine--tRNA ligase (Streptococcus mutans serotype c (strain ATCC 700610 / UA159)).